The primary structure comprises 326 residues: Glutaminase 2 (326 aa).

Ser73, Asn125, Glu169, Asn176, Tyr200, Tyr252, and Val270 together coordinate substrate.

Belongs to the glutaminase family. In terms of assembly, homotetramer.

The enzyme catalyses L-glutamine + H2O = L-glutamate + NH4(+). This Bacillus cereus (strain ATCC 14579 / DSM 31 / CCUG 7414 / JCM 2152 / NBRC 15305 / NCIMB 9373 / NCTC 2599 / NRRL B-3711) protein is Glutaminase 2.